The primary structure comprises 1084 residues: Teashirt homolog 1 (1084 aa).

Disordered stretches follow at residues 49–108 (EETE…SVSY), 140–167 (NSATSNNDASQKESSTPTPTPPTSTAST), and 269–298 (GHYRDDNRDKDSEKTKRWSKPRKRSLMEME). Composition is skewed to polar residues over residues 57 to 71 (QSYQNSPVSTATNQD) and 140 to 152 (NSATSNNDASQKE). C2H2-type zinc fingers lie at residues 246-270 (FRCKDCSAAYDTLVELTVHMNETGH) and 307-331 (LKCMYCGHSFESLQDLSVHMIKTKH). Residues 269–284 (GHYRDDNRDKDSEKTK) show a composition bias toward basic and acidic residues. The C2H2-type 3; atypical zinc finger occupies 416-440 (LKCMECGSSHDTLQQLTAHMMVTGH). Disordered stretches follow at residues 467–534 (SIPL…EKFE) and 653–728 (TGKV…LKAK). Composition is skewed to basic and acidic residues over residues 496 to 534 (SEEKKEPEKEKEKEKAPPAAGDAERKIKEETEDATEKFE), 653 to 671 (TGKVSIKKEERPTEKEKSS), and 681 to 714 (KENKDLPKTEETGSKPQKKGSDSETGKAKKESTL). S771 is subject to Phosphoserine. Residues 855 to 879 (GRLTPKSSTPSTVSEKSDADGSSFE) form a disordered region. Residues 859–868 (PKSSTPSTVS) are compositionally biased toward polar residues. The homeobox; atypical DNA-binding region spans 891–961 (RKGRQSNWNP…NVKYQLRRTG (71 aa)). C2H2-type zinc fingers lie at residues 976-998 (FFCNDCASQFRTASTYVSHLETH) and 1044-1067 (FQCKLCNRTFASKHAVKLHLSKTH).

The protein belongs to the teashirt C2H2-type zinc-finger protein family. Interacts (via homeobox domain) with APBB1 (via PID domain 1).

It is found in the nucleus. Functionally, probable transcriptional regulator involved in developmental processes. May act as a transcriptional repressor (Potential). The sequence is that of Teashirt homolog 1 (Tshz1) from Mus musculus (Mouse).